Here is a 166-residue protein sequence, read N- to C-terminus: Interferon gamma (166 aa).

Positions 1–23 are cleaved as a signal peptide; that stretch reads MNYTSFILAFQLCAILGSSTYYC. Glutamine 24 is subject to Pyrrolidone carboxylic acid. N-linked (GlcNAc...) asparagine glycosylation is found at asparagine 39 and asparagine 106. The segment at 147 to 166 is disordered; that stretch reads ANLRKRKRSQNPFRGRRALQ. Residues 148 to 166 show a composition bias toward basic residues; it reads NLRKRKRSQNPFRGRRALQ.

It belongs to the type II (or gamma) interferon family. Homodimer. Interacts with IFNGR1 (via extracellular domain); this interaction promotes IFNGR1 dimerization. Released primarily from activated T lymphocytes.

It is found in the secreted. Its function is as follows. Type II interferon produced by immune cells such as T-cells and NK cells that plays crucial roles in antimicrobial, antiviral, and antitumor responses by activating effector immune cells and enhancing antigen presentation. Primarily signals through the JAK-STAT pathway after interaction with its receptor IFNGR1 to affect gene regulation. Upon IFNG binding, IFNGR1 intracellular domain opens out to allow association of downstream signaling components JAK2, JAK1 and STAT1, leading to STAT1 activation, nuclear translocation and transcription of IFNG-regulated genes. Many of the induced genes are transcription factors such as IRF1 that are able to further drive regulation of a next wave of transcription. Plays a role in class I antigen presentation pathway by inducing a replacement of catalytic proteasome subunits with immunoproteasome subunits. In turn, increases the quantity, quality, and repertoire of peptides for class I MHC loading. Increases the efficiency of peptide generation also by inducing the expression of activator PA28 that associates with the proteasome and alters its proteolytic cleavage preference. Up-regulates as well MHC II complexes on the cell surface by promoting expression of several key molecules such as cathepsins B/CTSB, H/CTSH, and L/CTSL. Participates in the regulation of hematopoietic stem cells during development and under homeostatic conditions by affecting their development, quiescence, and differentiation. The chain is Interferon gamma (IFNG) from Equus asinus (Donkey).